Reading from the N-terminus, the 336-residue chain is MLQSLAGSSCVRLVERHRSAWCFGFLVLGYLLYLVFGAVVFSSVELPYEDLLRQELRKLKRRFLEEHECLSEPQLEQFLGRVLEASNYGVSVLSNASGNWNWDFTSALFFASTVLSTTGYGHTVPLSDGGKAFCIIYSVIGIPFTLLFLTAVVQRVTVHVTRRPVLYFHIRWGFSKQVVAIVHAVLLGFVTVSCFFFIPAAVFSVLEDDWNFLESFYFCFISLSTIGLGDYVPGEGYNQKFRELYKIGITCYLLLGLIAMLVVLETFCELHELKKFRKMFYVKKDKDEDQVHIMEHDQLSFSSITEQAAGLKEEQKQNEPFVASQSPPYEDGSANH.

Topologically, residues 1 to 20 (MLQSLAGSSCVRLVERHRSA) are cytoplasmic. A helical transmembrane segment spans residues 21 to 41 (WCFGFLVLGYLLYLVFGAVVF). The Extracellular segment spans residues 42–103 (SSVELPYEDL…SNASGNWNWD (62 aa)). Asparagine 95 carries an N-linked (GlcNAc...) asparagine glycan. An intramembrane region (helical) is located at residues 104–116 (FTSALFFASTVLS). An intramembrane segment occupies 117-122 (TTGYGH). The interval 117 to 122 (TTGYGH) is selectivity filter 1. Residues 123–132 (TVPLSDGGKA) lie on the Extracellular side of the membrane. Residues 133–156 (FCIIYSVIGIPFTLLFLTAVVQRV) form a helical membrane-spanning segment. Residues 157–181 (TVHVTRRPVLYFHIRWGFSKQVVAI) lie on the Cytoplasmic side of the membrane. A helical transmembrane segment spans residues 182-202 (VHAVLLGFVTVSCFFFIPAAV). Topologically, residues 203 to 211 (FSVLEDDWN) are extracellular. An intramembrane region (helical) is located at residues 212-224 (FLESFYFCFISLS). Residues 225-230 (TIGLGD) are selectivity filter 2. Residues 225–231 (TIGLGDY) lie within the membrane without spanning it. The Extracellular portion of the chain corresponds to 232–243 (VPGEGYNQKFRE). Residues 244–267 (LYKIGITCYLLLGLIAMLVVLETF) form a helical membrane-spanning segment. Residues 268-336 (CELHELKKFR…PPYEDGSANH (69 aa)) lie on the Cytoplasmic side of the membrane. Lysine 274 is covalently cross-linked (Glycyl lysine isopeptide (Lys-Gly) (interchain with G-Cter in SUMO)). An important for intracellular retention in recycling endosomes region spans residues 293–299 (IMEHDQL). The interval 310–336 (GLKEEQKQNEPFVASQSPPYEDGSANH) is disordered. A Phosphoserine modification is found at serine 326.

Belongs to the two pore domain potassium channel (TC 1.A.1.8) family. In terms of assembly, homodimer; disulfide-linked. Heterodimer with KCNK2; disulfide-linked. In astrocytes, forms mostly heterodimeric potassium channels with KCNK2, with only a minor proportion of functional channels containing homodimeric KCNK1. Interacts with KCNK3 and KCNK9, forming functional heterodimeric channels. Interacts with GNG4. Identified in a complex with PSD and ARF6; interacts only with PSD that is bound to ARF6. Interacts with UBE2I. Post-translationally, sumoylation is controversial. Sumoylated by UBE2I. Not sumoylated when expressed in xenopus oocytes or mammalian cells. Sumoylation inactivates the channel, but does not interfere with expression at the cell membrane. Sumoylation of a single subunit is sufficient to silence the dimeric channel. Sumoylation of KCNK1 is sufficient to silence heterodimeric channels formed by KCNK1 and KCNK3 or KCNK9. Desumoylated by SENP1; this activates the channel. Desumoylated by SENP1; this strongly increases halothane-mediated activation of heterodimeric channels formed with KCNK9. SENP1 treatment has no effect. As to expression, detected in brain and in kidney cortex and medulla, especially at the renal brush border membranes of the proximal convoluted tubules, in distal tubules and on intercalated cells of the collecting duct. Detected in cerebellum granule neurons. Detected in astrocytes in hippocampus stratum radiatum. Highly expressed in the stria vascularis in the cochlea. Detected in neurons in Scarpa's ganglion in the inner ear, at nerve terminals in the crista ampullaris, in supporting cells and dark cells, but not in hair cells (at protein level). Detected in the brain cerebellar granule cell layer, amygdala, thalamus reticular nucleus, habenula, mesencephalic trigeminal neurons, neocortex and piriform cortex, and at lower levels in the olfactory bulb. Detected in Scarpa's ganglia and crista ampullaris in the inner ear.

It is found in the cell membrane. The protein localises to the recycling endosome. Its subcellular location is the apical cell membrane. The protein resides in the cytoplasmic vesicle. It localises to the perikaryon. It is found in the cell projection. The protein localises to the dendrite. Its subcellular location is the synaptic cell membrane. It carries out the reaction K(+)(in) = K(+)(out). It catalyses the reaction NH4(+)(in) = NH4(+)(out). The catalysed reaction is Na(+)(in) = Na(+)(out). The enzyme catalyses Rb(+)(in) = Rb(+)(out). It carries out the reaction Cs(+)(in) = Cs(+)(out). It catalyses the reaction Li(+)(in) = Li(+)(out). The catalysed reaction is L-glutamate(out) = L-glutamate(in). The enzyme catalyses chloride(in) = chloride(out). With respect to regulation, inhibited by 100 uM quinine. Slightly inhibited by Ba(+). Activity is first increased and then decreased when the extracellular pH is lowered to 6.0. Functionally, ion channel that contributes to passive transmembrane potassium transport and to the regulation of the resting membrane potential in brain astrocytes, but also in kidney and in other tissues. Forms dimeric channels through which potassium ions pass in accordance with their electrochemical gradient. The channel is selective for K(+) ions at physiological potassium concentrations and at neutral pH, but becomes permeable to Na(+) at subphysiological K(+) levels and upon acidification of the extracellular medium. The homodimer has very low potassium channel activity, when expressed in heterologous systems, and can function as weakly inward rectifying potassium channel. Channel activity is modulated by activation of serotonin receptors. Heterodimeric channels containing KCNK1 and KCNK2 have much higher activity, and may represent the predominant form in astrocytes. Heterodimeric channels containing KCNK1 and KCNK3 or KCNK9 have much higher activity. Heterodimeric channels formed by KCNK1 and KCNK9 may contribute to halothane-sensitive currents. Mediates outward rectifying potassium currents in dentate gyrus granule cells and contributes to the regulation of their resting membrane potential. Contributes to the regulation of action potential firing in dentate gyrus granule cells and down-regulates their intrinsic excitability. Contributes to the regulation of the resting membrane potential of pancreatic beta cells. In astrocytes, the heterodimer formed by KCNK1 and KCNK2 is required for rapid glutamate release in response to activation of G-protein coupled receptors, such as F2R and CNR1. Required for normal ion and water transport in the kidney. The low channel activity of homodimeric KCNK1 may be due to sumoylation. The low channel activity may be due to rapid internalization from the cell membrane and retention in recycling endosomes. Permeable to monovalent cations with ion selectivity for K(+) &gt; Rb(+) &gt;&gt; NH4(+) &gt;&gt; Cs(+) = Na(+) = Li(+). The protein is Potassium channel subfamily K member 1 of Rattus norvegicus (Rat).